Reading from the N-terminus, the 306-residue chain is uncharacterized protein (306 aa).

Residues 1 to 6 (MRFRQL) are Cytoplasmic-facing. A helical membrane pass occupies residues 7–27 (LPLFGALFALYIIWGSTYFVI). One can recognise an EamA 1 domain in the interval 18-141 (IIWGSTYFVI…GLAGIIMLNS (124 aa)). Over 28–36 (RIGVESWPP) the chain is Periplasmic. The chain crosses the membrane as a helical span at residues 37–57 (LMMAGVRFLAAGILLLAFLLL). Topologically, residues 58-67 (RGHKLPPLRP) are cytoplasmic. The chain crosses the membrane as a helical span at residues 68-88 (LLNAALIGLLLLAVGNGMVTV). At 89-93 (AEHQN) the chain is on the periplasmic side. Residues 94–114 (VPSGIAAVVVATVPLFTLCFS) traverse the membrane as a helical segment. Residues 115–125 (RLFGIKTRKLE) are Cytoplasmic-facing. A helical transmembrane segment spans residues 126–146 (WVGIAIGLAGIIMLNSGGNLS). The Periplasmic segment spans residues 147-148 (GN). Residues 149–169 (PWGAILILIGSISWAFGSVYG) form a helical membrane-spanning segment. The 126-residue stretch at 160–285 (ISWAFGSVYG…IVFAVVLVTL (126 aa)) folds into the EamA 2 domain. Topologically, residues 170 to 173 (SRIT) are cytoplasmic. The chain crosses the membrane as a helical span at residues 174–194 (LPVGMMAGAIEMLAAGVVLMI). Residues 195 to 206 (ASMIAGEKLTAL) lie on the Periplasmic side of the membrane. Residues 207–227 (PSLSGFLAVGYLALFGSIIAI) form a helical membrane-spanning segment. The Cytoplasmic portion of the chain corresponds to 228–239 (NAYMYLIRNVSP). The chain crosses the membrane as a helical span at residues 240 to 260 (ALATSYAYVNPVVAVLLGTGL). The Periplasmic portion of the chain corresponds to 261–269 (GGETLSKIE). Residues 270–290 (WLALGVIVFAVVLVTLGKYLF) traverse the membrane as a helical segment. Residues 291–306 (PAKPVVAPVIQDASSE) lie on the Cytoplasmic side of the membrane.

The protein belongs to the EamA transporter family.

It localises to the cell inner membrane. This is an uncharacterized protein from Escherichia coli O157:H7.